We begin with the raw amino-acid sequence, 83 residues long: uncharacterized protein (83 aa).

This is an uncharacterized protein from Lactuca sativa (Garden lettuce).